Here is a 141-residue protein sequence, read N- to C-terminus: Sperm protein associated with the nucleus on the X chromosome N3 (141 aa).

A compositionally biased stretch (polar residues) spans 1–10; sequence MEQPTSSTNG. 2 disordered regions span residues 1-47 and 66-141; these read MEQP…TKTS and NQLE…SGED. Positions 11–26 are enriched in basic and acidic residues; sequence EKTKSPCESNNKKNDE. Residues 66 to 80 show a composition bias toward polar residues; the sequence is NQLENEQSQENSINP. A compositionally biased stretch (acidic residues) spans 84 to 103; the sequence is EEDEGVDLSEGSSNEDEDLG. Positions 132–141 are enriched in polar residues; that stretch reads EGSSQDSGED.

Belongs to the SPAN-X family.

The protein is Sperm protein associated with the nucleus on the X chromosome N3 (SPANXN3) of Homo sapiens (Human).